A 1053-amino-acid polypeptide reads, in one-letter code: Phosphoenolpyruvate carboxylase (1053 aa).

His-246 is an active-site residue. Over residues 461–473 the composition is skewed to basic and acidic residues; it reads RNTRLQQQQEKDP. The disordered stretch occupies residues 461–480; that stretch reads RNTRLQQQQEKDPTTPLPEY. Residue Lys-699 is part of the active site.

The protein belongs to the PEPCase type 1 family. It depends on Mg(2+) as a cofactor.

The catalysed reaction is oxaloacetate + phosphate = phosphoenolpyruvate + hydrogencarbonate. In terms of biological role, forms oxaloacetate, a four-carbon dicarboxylic acid source for the tricarboxylic acid cycle. The polypeptide is Phosphoenolpyruvate carboxylase (ppc) (Synechococcus sp. (strain ATCC 27144 / PCC 6301 / SAUG 1402/1) (Anacystis nidulans)).